The chain runs to 240 residues: Probable transcriptional regulatory protein Hac_0344 (240 aa).

The protein belongs to the TACO1 family.

It is found in the cytoplasm. This Helicobacter acinonychis (strain Sheeba) protein is Probable transcriptional regulatory protein Hac_0344.